Consider the following 251-residue polypeptide: Sugar fermentation stimulation protein homolog (251 aa).

Belongs to the SfsA family.

In Symbiobacterium thermophilum (strain DSM 24528 / JCM 14929 / IAM 14863 / T), this protein is Sugar fermentation stimulation protein homolog.